The sequence spans 274 residues: Protein LIKE COV 3 (274 aa).

The Cytoplasmic portion of the chain corresponds to 1 to 60 (METRERDLERLIPMHKSGASPRDVVLSVPPSPLASPIHVAGKEAIYKVIRSWASKKFMTG). A helical membrane pass occupies residues 61 to 81 (CVILLPIAVTFYFTWWFIHFV). At 82-93 (DGFFSPIYTHLG) the chain is on the extracellular side. A helical membrane pass occupies residues 94–114 (INMFGLGFVTSITFIFMVGVF). Residues 115-274 (MSSWLGASVL…VCLSLVLAWT (160 aa)) are Cytoplasmic-facing.

It belongs to the plant COV1 protein family.

It localises to the membrane. This Arabidopsis thaliana (Mouse-ear cress) protein is Protein LIKE COV 3.